A 119-amino-acid polypeptide reads, in one-letter code: DNA-binding protein Maeo_0998 (119 aa).

Over residues 1–11 the composition is skewed to basic and acidic residues; that stretch reads MDIEEIKRQKM. The segment at 1 to 36 is disordered; the sequence is MDIEEIKRQKMMELQQQQAQGAPNPEEIQQQQEQER. Over residues 15-32 the composition is skewed to low complexity; sequence QQQQAQGAPNPEEIQQQQ.

This sequence belongs to the PDCD5 family.

The polypeptide is DNA-binding protein Maeo_0998 (Methanococcus aeolicus (strain ATCC BAA-1280 / DSM 17508 / OCM 812 / Nankai-3)).